Here is a 142-residue protein sequence, read N- to C-terminus: Universal stress protein D (142 aa).

This sequence belongs to the universal stress protein A family.

It is found in the cytoplasm. In terms of biological role, required for resistance to DNA-damaging agents. This is Universal stress protein D (uspD) from Escherichia coli (strain K12).